A 615-amino-acid chain; its full sequence is Protein translocase subunit SecD (615 aa).

Helical transmembrane passes span 10-30 (YVMLIVVIVIGLLYALPNLFG), 452-472 (QGLEACLAGLLVSILFMIIFY), 477-497 (LIATSALIANLILIVGIMSLL), 504-524 (MPGIAGIVLTLAVAVDANVLI), 548-570 (GAFSSIFDANITTLIKVIILYAV), and 585-605 (GVATSMFTAIVGTRAIVNLLY).

Belongs to the SecD/SecF family. SecD subfamily. Forms a complex with SecF. Part of the essential Sec protein translocation apparatus which comprises SecA, SecYEG and auxiliary proteins SecDF-YajC and YidC.

The protein resides in the cell inner membrane. Functionally, part of the Sec protein translocase complex. Interacts with the SecYEG preprotein conducting channel. SecDF uses the proton motive force (PMF) to complete protein translocation after the ATP-dependent function of SecA. The protein is Protein translocase subunit SecD of Shigella flexneri.